Consider the following 868-residue polypeptide: Leucine--tRNA ligase (868 aa).

The 'HIGH' region signature appears at 42–52; that stretch reads PYPSGKLHMGH. The 'KMSKS' region motif lies at 627–631; that stretch reads KMSKS. Lys630 contacts ATP.

It belongs to the class-I aminoacyl-tRNA synthetase family.

It is found in the cytoplasm. It carries out the reaction tRNA(Leu) + L-leucine + ATP = L-leucyl-tRNA(Leu) + AMP + diphosphate. This Pseudomonas putida (strain W619) protein is Leucine--tRNA ligase.